The primary structure comprises 720 residues: Protein O-mannosyl-transferase 1 (720 aa).

8 helical membrane-spanning segments follow: residues 7-27 (PVSVTVEINVLLLAVTALALF), 67-87 (FGHMILALGAYLGGFDGNFVW), 105-125 (LIPALAGSFCVPLAYLVVVEL), 127-147 (YSHFSALGACALLLMENSLIV), 150-170 (RFMLLESVLIFFLLLAVLSYL), 178-198 (SFFKWFWLVICGVSCAFGIGV), 201-221 (MGMFTYFLLLSLAAVHTWQLI), and 239-259 (FLALVVLPVIMYLGFFYIHLT). MIR domains follow at residues 291-354 (PLDV…IKDP), 365-422 (PKPV…VDIV), and 426-486 (SEKE…VEEH). 4 helical membrane passes run 570-590 (IVTWTTGNITLVVYCLLFLTY), 609-629 (LVLAGVVCLGGWAVNYLPFFL), 633-653 (TLFLYHYLPALTFKILQIPIV), and 670-690 (AFGGVILAVLCSVYMSYHSLS).

It belongs to the glycosyltransferase 39 family. Widely expressed. Has particularly strong expression in testis, ovary, brain, liver and heart.

The protein resides in the endoplasmic reticulum membrane. The enzyme catalyses a di-trans,poly-cis-dolichyl beta-D-mannosyl phosphate + L-seryl-[protein] = 3-O-(alpha-D-mannosyl)-L-seryl-[protein] + a di-trans,poly-cis-dolichyl phosphate + H(+). It catalyses the reaction a di-trans,poly-cis-dolichyl beta-D-mannosyl phosphate + L-threonyl-[protein] = 3-O-(alpha-D-mannosyl)-L-threonyl-[protein] + a di-trans,poly-cis-dolichyl phosphate + H(+). It functions in the pathway protein modification; protein glycosylation. Transfers mannosyl residues to the hydroxyl group of serine or threonine residues. Coexpression of both POMT1 and POMT2 is necessary for enzyme activity, expression of either POMT1 or POMT2 alone is insufficient. This is Protein O-mannosyl-transferase 1 from Danio rerio (Zebrafish).